The primary structure comprises 374 residues: Ribosomal RNA large subunit methyltransferase G (374 aa).

This sequence belongs to the methyltransferase superfamily. RlmG family.

The protein localises to the cytoplasm. The enzyme catalyses guanosine(1835) in 23S rRNA + S-adenosyl-L-methionine = N(2)-methylguanosine(1835) in 23S rRNA + S-adenosyl-L-homocysteine + H(+). Specifically methylates the guanine in position 1835 (m2G1835) of 23S rRNA. This chain is Ribosomal RNA large subunit methyltransferase G, found in Ectopseudomonas mendocina (strain ymp) (Pseudomonas mendocina).